The chain runs to 446 residues: D(3) dopamine receptor (446 aa).

At 1–32 the chain is on the extracellular side; sequence MAPLSQISSHINSTCGAENSTGVNRARPHAYY. N-linked (GlcNAc...) asparagine glycosylation is found at Asn-12 and Asn-19. The helical transmembrane segment at 33-55 threads the bilayer; sequence ALSYCALILAIIFGNGLVCAAVL. Over 56-65 the chain is Cytoplasmic; sequence RERALQTTTN. The chain crosses the membrane as a helical span at residues 66–88; that stretch reads YLVVSLAVADLLVATLVMPWVVY. Residues 89-104 are Extracellular-facing; the sequence is LEVTGGVWNFSRICCD. An N-linked (GlcNAc...) asparagine glycan is attached at Asn-97. A disulfide bond links Cys-103 and Cys-181. A helical transmembrane segment spans residues 105-126; sequence VFVTLDVMMCTASILNLCAISI. Over 127-149 the chain is Cytoplasmic; it reads DRYTAVVMPVHYQHGTGQSSCRR. A helical membrane pass occupies residues 150–170; that stretch reads VALMITAVWVLAFAVSCPLLF. The Extracellular portion of the chain corresponds to 171–187; sequence GFNTTGDPSICSISNPD. Asn-173 carries an N-linked (GlcNAc...) asparagine glycan. The helical transmembrane segment at 188–209 threads the bilayer; that stretch reads FVIYSSVVSFYVPFGVTVLVYA. At 210–375 the chain is on the cytoplasmic side; that stretch reads RIYMVLRQRR…VPLREKKATQ (166 aa). Residues 376 to 397 form a helical membrane-spanning segment; sequence MVVIVLGAFIVCWLPFFLTHVL. Over 398 to 412 the chain is Extracellular; sequence NTHCQACHVSPELYR. Residues Cys-401 and Cys-404 are joined by a disulfide bond. Residues 413-432 traverse the membrane as a helical segment; it reads ATTWLGYVNSALNPVIYTTF. Residues 433–446 lie on the Cytoplasmic side of the membrane; it reads NIEFRKAFLKILSC.

It belongs to the G-protein coupled receptor 1 family. As to quaternary structure, interacts with CLIC6. Interacts with GRK4. Interacts with PALM. Interacts with FLNA (via filamin repeat 21); increases PKA-mediated phosphorylation of FLNA. Post-translationally, phosphorylated by GRK4. Palmitoylated.

It is found in the cell membrane. Dopamine receptor whose activity is mediated by G proteins which inhibit adenylyl cyclase. Promotes cell proliferation. In Mus musculus (Mouse), this protein is D(3) dopamine receptor (Drd3).